A 349-amino-acid polypeptide reads, in one-letter code: N-acetyl-gamma-glutamyl-phosphate reductase (349 aa).

Cysteine 152 is a catalytic residue.

The protein belongs to the NAGSA dehydrogenase family. Type 1 subfamily.

It localises to the cytoplasm. The enzyme catalyses N-acetyl-L-glutamate 5-semialdehyde + phosphate + NADP(+) = N-acetyl-L-glutamyl 5-phosphate + NADPH + H(+). It functions in the pathway amino-acid biosynthesis; L-arginine biosynthesis; N(2)-acetyl-L-ornithine from L-glutamate: step 3/4. Functionally, catalyzes the NADPH-dependent reduction of N-acetyl-5-glutamyl phosphate to yield N-acetyl-L-glutamate 5-semialdehyde. This chain is N-acetyl-gamma-glutamyl-phosphate reductase, found in Clavibacter sepedonicus (Clavibacter michiganensis subsp. sepedonicus).